The following is a 269-amino-acid chain: MAHISDIKLIRTDTTLDLSQKAEKGMIWTMGGASYLYYNAYDHGSLTCRCGTLLIASSGGKYNPIRTFSSHQILEATNNFDWSYAIGVDRFVWYKGTIENRAVLIKYYKGEPFNFDPDNFYRDIAVSSMMSSHKNVLKLLGCCLEFPRPVLVCEYPEKGALAYIGGAGEVIKPLAWSVRLKIAKEIADAVTYLHTEFPRTIIHRDLKLTNIFLDENWTAKLSSFSLSIPIPEGELGVEDIVCGTQGFGEPHYMENMDSIKNRLMVTVIT.

A Protein kinase domain is found at 80-269 (FDWSYAIGVD…KNRLMVTVIT (190 aa)). ATP is bound by residues 86-94 (IGVDRFVWY) and Lys-106. The active-site Proton acceptor is the Asp-205.

Belongs to the protein kinase superfamily. Ser/Thr protein kinase family. ZRK subfamily.

The enzyme catalyses L-seryl-[protein] + ATP = O-phospho-L-seryl-[protein] + ADP + H(+). The catalysed reaction is L-threonyl-[protein] + ATP = O-phospho-L-threonyl-[protein] + ADP + H(+). This is Serine/threonine-protein kinase ZRK7 from Arabidopsis thaliana (Mouse-ear cress).